A 66-amino-acid chain; its full sequence is Large ribosomal subunit protein bL35 (66 aa).

Basic residues-rich tracts occupy residues 1–15 (MPKL…KRFK) and 27–40 (AGKR…TKKQ). Residues 1 to 40 (MPKLKTKSGAKKRFKVTGTGKVMSAHAGKRHGMIKRTKKQ) are disordered.

Belongs to the bacterial ribosomal protein bL35 family.

The protein is Large ribosomal subunit protein bL35 of Rhodopseudomonas palustris (strain BisA53).